Consider the following 203-residue polypeptide: High frequency lysogenization protein HflD homolog (203 aa).

Belongs to the HflD family.

The protein resides in the cytoplasm. Its subcellular location is the cell inner membrane. This chain is High frequency lysogenization protein HflD homolog, found in Vesicomyosocius okutanii subsp. Calyptogena okutanii (strain HA).